The chain runs to 501 residues: Lysine--tRNA ligase (501 aa).

Residues glutamate 404 and glutamate 411 each coordinate Mg(2+).

The protein belongs to the class-II aminoacyl-tRNA synthetase family. In terms of assembly, homodimer. Mg(2+) is required as a cofactor.

It localises to the cytoplasm. It catalyses the reaction tRNA(Lys) + L-lysine + ATP = L-lysyl-tRNA(Lys) + AMP + diphosphate. This chain is Lysine--tRNA ligase, found in Campylobacter jejuni (strain RM1221).